Consider the following 245-residue polypeptide: Probable phosphatase YcdX (245 aa).

Residues His-7, His-9, His-15, His-40, Glu-73, His-101, His-131, Asp-192, and His-194 each coordinate Zn(2+).

This sequence belongs to the PHP family. As to quaternary structure, homotrimer. Requires Zn(2+) as cofactor.

In Shigella dysenteriae serotype 1 (strain Sd197), this protein is Probable phosphatase YcdX.